The sequence spans 458 residues: Argininosuccinate lyase (458 aa).

Belongs to the lyase 1 family. Argininosuccinate lyase subfamily.

It localises to the cytoplasm. It carries out the reaction 2-(N(omega)-L-arginino)succinate = fumarate + L-arginine. The protein operates within amino-acid biosynthesis; L-arginine biosynthesis; L-arginine from L-ornithine and carbamoyl phosphate: step 3/3. The sequence is that of Argininosuccinate lyase from Acetivibrio thermocellus (strain ATCC 27405 / DSM 1237 / JCM 9322 / NBRC 103400 / NCIMB 10682 / NRRL B-4536 / VPI 7372) (Clostridium thermocellum).